An 846-amino-acid chain; its full sequence is Protein kintoun (846 aa).

Disordered regions lie at residues 216 to 240, 372 to 405, 574 to 631, and 762 to 846; these read TAEEQEPHPLAHMFPTKPPAPGKPE, LRHFSREDSGVELHSNSESPVEEDPDGELSDSKA, QALK…ESAC, and KKNQ…EMDD. Residues 372 to 382 are compositionally biased toward basic and acidic residues; that stretch reads LRHFSREDSGV. S380 is subject to Phosphoserine. The segment covering 391 to 400 has biased composition (acidic residues); it reads PVEEDPDGEL. Over residues 583–603 the composition is skewed to basic and acidic residues; sequence GTKEEEEKGNQDQEPESDKQH. Composition is skewed to basic residues over residues 611–622 and 762–776; these read KAGKKQRKRNKK and KKNQKRRDLKLRAQQ. A Phosphoserine modification is found at S780. A compositionally biased stretch (polar residues) spans 795-809; that stretch reads LKQQENQSRNCNKPN.

It belongs to the PIH1 family. Kintoun subfamily. Interacts with Pp1alpha-96A, Pp1-87B, Pp1-13C and flw.

It is found in the cytoplasm. In terms of biological role, required for cytoplasmic pre-assembly of axonemal dyneins, thereby playing a central role in motility in cilia and flagella. Involved in pre-assembly of dynein arm complexes in the cytoplasm before intraflagellar transport loads them for the ciliary compartment. The protein is Protein kintoun of Drosophila yakuba (Fruit fly).